The primary structure comprises 60 residues: uncharacterized protein (60 aa).

This is an uncharacterized protein from Enterobacteria phage T4 (Bacteriophage T4).